A 376-amino-acid chain; its full sequence is MATPVDPPNGIRNQGKHYFSMWQTLFEIDTKYVPIKPIGRGAYGVVCSSVNRESNERVAIKKIHNVFENRIDALRTLRELKLLRHLRHENVVALKDVMMANHKRSFKDVYLVYELMDTDLHQIIKSSQVLSNDHCQYFLFQLLRGLKYIHSANILHRDLKPGNLLVNANCDLKICDFGLARTSNTKGQFMTEYVVTRWYRAPELLLCCDNYGTSIDVWSVGCIFAELLGRKPVFPGTECLNQIKLIINILGSQREEDLEFIDNPKAKRYIESLPYSPGISFSRLYPGANVLAIDLLQKMLVLDPSKRISVTEALQHPYMAPLYDPSANPPAQVPIDLDVDEDEDLGAEMIRELMWKEMIHYHPEAATINNNEVSEF.

The Protein kinase domain maps to 32 to 319 (YVPIKPIGRG…VTEALQHPYM (288 aa)). ATP contacts are provided by residues 38 to 46 (IGRGAYGVV) and Lys-61. The Proton acceptor role is filled by Asp-158. Phosphothreonine is present on Thr-191. The TXY motif lies at 191–193 (TEY). Tyr-193 bears the Phosphotyrosine mark. Thr-196 is modified (phosphothreonine).

Belongs to the protein kinase superfamily. CMGC Ser/Thr protein kinase family. MAP kinase subfamily. In terms of assembly, interacts with MKK3. In terms of processing, dually phosphorylated on Thr-191 and Tyr-193, which activates the enzyme. Phosphorylated on Ser residue. As to expression, highest levels in the stem. Present in the leaf, root and flower, but not in seeds.

It carries out the reaction L-seryl-[protein] + ATP = O-phospho-L-seryl-[protein] + ADP + H(+). It catalyses the reaction L-threonyl-[protein] + ATP = O-phospho-L-threonyl-[protein] + ADP + H(+). Activated by threonine and tyrosine phosphorylation. The polypeptide is Mitogen-activated protein kinase 2 (MPK2) (Arabidopsis thaliana (Mouse-ear cress)).